The primary structure comprises 431 residues: L-ornithine N(5)-monooxygenase (431 aa).

FAD is bound by residues glutamate 40 to histidine 48 and glutamine 59. Substrate is bound at residue lysine 64. Residues cysteine 202–serine 205 and arginine 228 each bind NADP(+). Residues asparagine 242–tyrosine 245 and asparagine 273 each bind substrate. Asparagine 273–serine 275 lines the NADP(+) pocket. Residue threonine 399–leucine 401 participates in FAD binding. Serine 402 is a substrate binding site.

Belongs to the lysine N(6)-hydroxylase/L-ornithine N(5)-oxygenase family. FAD is required as a cofactor.

Its subcellular location is the cytoplasm. It is found in the nucleus. It catalyses the reaction L-ornithine + NADPH + O2 = N(5)-hydroxy-L-ornithine + NADP(+) + H2O. It carries out the reaction L-ornithine + NADH + O2 = N(5)-hydroxy-L-ornithine + NAD(+) + H2O. It functions in the pathway siderophore biosynthesis; ferrichrome biosynthesis. Catalyzes the conversion of L-ornithine to N(5)-hydroxyornithine, the first step in the biosynthesis of all hydroxamate-containing siderophores, such as ferrichrome. The chain is L-ornithine N(5)-monooxygenase from Schizosaccharomyces pombe (strain 972 / ATCC 24843) (Fission yeast).